A 587-amino-acid chain; its full sequence is Serine/threonine-protein phosphatase 2A 65 kDa regulatory subunit A beta isoform (587 aa).

Serine 2 bears the N-acetylserine mark. 14 HEAT repeats span residues 2–42 (SMID…ALGE), 44–80 (RTRK…YVGG), 81–119 (VEYA…QMRE), 158–196 (DMLK…TVES), 197–235 (AHLK…LLEP), 236–274 (QDCV…AVGP), 275–313 (EPTR…ILNP), 315–352 (IAIQ…VLGK), 353–391 (DATI…VIGI), 393–430 (LLSQ…QLGV), 432–469 (FFDD…EFGP), 470–508 (EWAM…VMGS), 509–547 (EITC…IVDQ), and 549–586 (VVEK…VMMS).

This sequence belongs to the phosphatase 2A regulatory subunit A family. As to quaternary structure, PP2A consists of a common heterodimeric core enzyme, composed of a 36 kDa catalytic subunit (subunit C) and a 65 kDa constant regulatory subunit (subunit A), that associates with a variety of regulatory subunits such as subunits B (the R2/B/PR55/B55, R3/B''/PR72/PR130/PR59 and R5/B'/B56 families). Interacts with B'THETA. Interacts with SRK2E/OST1. Interacts with SIC/RON3. As to expression, ubiquitous, with higher levels in roots and flowers (at protein level).

The protein resides in the cytoplasm. It localises to the cytosol. The protein localises to the nucleus. It is found in the peroxisome. The A subunit of protein phosphatase 2A serves as a scaffolding molecule to coordinate the assembly of the catalytic subunit and a variable regulatory B subunit. Involved during developmental process such as seedling and floral developments. Seems to act as a negative regulator of PP2A catalytic activity. Associates with the serine/threonine-protein phosphatase PP2A catalytic subunit C and regulatory subunit B' to positively regulates beta-oxidation of fatty acids and protoauxins in peroxisomes by dephosphorylating peroxisomal beta-oxidation-related proteins. In Arabidopsis thaliana (Mouse-ear cress), this protein is Serine/threonine-protein phosphatase 2A 65 kDa regulatory subunit A beta isoform (PP2AA2).